Here is a 350-residue protein sequence, read N- to C-terminus: Probable arabinogalactan endo-beta-1,4-galactanase A (350 aa).

The first 16 residues, 1–16, serve as a signal peptide directing secretion; the sequence is MIYPLLLSALPLLSSA. Residue asparagine 128 is glycosylated (N-linked (GlcNAc...) asparagine). The Proton donor role is filled by glutamate 152. Residue glutamate 262 is the Nucleophile of the active site.

This sequence belongs to the glycosyl hydrolase 53 family.

The protein resides in the secreted. It carries out the reaction The enzyme specifically hydrolyzes (1-&gt;4)-beta-D-galactosidic linkages in type I arabinogalactans.. Endogalactanase involved in the degradation of plant cell wall polysaccharides, and more particularly of hairy regions of pectin. The chain is Probable arabinogalactan endo-beta-1,4-galactanase A (galA) from Aspergillus tubingensis.